A 107-amino-acid chain; its full sequence is UPF0145 protein PC1_1703 (107 aa).

Belongs to the UPF0145 family.

The polypeptide is UPF0145 protein PC1_1703 (Pectobacterium carotovorum subsp. carotovorum (strain PC1)).